Consider the following 360-residue polypeptide: Peptide chain release factor 1 (360 aa).

Gln-235 is subject to N5-methylglutamine. Residues 285–295 show a composition bias toward polar residues; that stretch reads AQQASEASTRK. Residues 285 to 305 form a disordered region; it reads AQQASEASTRKSLIGSGDRSD.

This sequence belongs to the prokaryotic/mitochondrial release factor family. Post-translationally, methylated by PrmC. Methylation increases the termination efficiency of RF1.

The protein localises to the cytoplasm. Its function is as follows. Peptide chain release factor 1 directs the termination of translation in response to the peptide chain termination codons UAG and UAA. This Thiobacillus denitrificans (strain ATCC 25259 / T1) protein is Peptide chain release factor 1.